The chain runs to 296 residues: CTD kinase subunit gamma (296 aa).

The segment at 25 to 44 (RDSITSSSTTTPPSSQQKLN) is disordered. Residues 29–39 (TSSSTTTPPSS) show a composition bias toward low complexity. A Phosphothreonine modification is found at T35.

Belongs to the CTK3 family. In terms of assembly, CTDK-I consists of three subunits, CTK1, CTK2 and CTK3 (also called alpha, beta and gamma). Interacts with CTK1. Heterodimerization with CTK2 is required to protect this subunit from degradation. In terms of processing, ubiquitinated. Ubiquitination leads to degradation by the 26S proteasome pathway.

The protein resides in the nucleus. The protein localises to the nucleolus. It is found in the cytoplasm. In terms of biological role, gamma subunit of the CTDK-I complex, which hyperphosphorylates the C-terminal heptapeptide repeat domain (CTD) of the largest RNA polymerase II subunit. CTDK-I phosphorylates 'Ser-5' if the CTD substrate is not phosphorylated at 'Ser-5', but will phosphorylate 'Ser-2' of a CTD substrate if 'Ser-5' is already phosphorylated. CTDK-I is also more reactive toward substrates that are prephosphorylated at 'Ser-2' or 'Ser-5' compared with an unphosphorylated CTD substrate, therefore efficiently creating doubly phosphorylated CTD repeats. Involved in RNA polymerase I transcription and RNA polymerase II transcriptional elongation, and as part of the CTDK-I complex, pre-mRNA 3'-end processing and SET2 mediated H3K36 methylation. Together with CTK2, required for CTK1 CTD kinase activation. Required for DNA damage induced transcription. Involved in the adaptation to alternative carbon sources, including galactose, glycerol and ethanol, but not raffinose. Required for the integrity of the rDNA locus. This is CTD kinase subunit gamma (CTK3) from Saccharomyces cerevisiae (strain ATCC 204508 / S288c) (Baker's yeast).